A 390-amino-acid polypeptide reads, in one-letter code: Monomeric sarcosine oxidase (390 aa).

FAD is bound at residue 6–36 (DVIVVGAGSMGMAAGYQLAKQGVKTLLVDAF). Cys-316 carries the post-translational modification S-8alpha-FAD cysteine.

In terms of assembly, monomer. It depends on FAD as a cofactor.

Its subcellular location is the cytoplasm. The catalysed reaction is sarcosine + O2 + H2O = formaldehyde + glycine + H2O2. Pyrrole-2-carboxylate is a competitive inhibitor. N-(cyclopropyl)glycine (CPG) is a mechanism-based inhibitor and inactivates the enzyme by covalently modifying the flavin. Functionally, catalyzes the oxidative demethylation of sarcosine. Can also oxidize other secondary amino acids such as N-methyl-L-alanine. This Bacillus sp. (strain B-0618) protein is Monomeric sarcosine oxidase (soxA).